The primary structure comprises 102 residues: MIPGEVITPEGDIELNVDRPTLKVSVANTGDRPIQVGSHFHFAEANDALQFDRGLTKGYRLNIAAGTAVRFEPGQSRDVELVALSGKRQVYGFAGRVMGALD.

This sequence belongs to the urease beta subunit family. As to quaternary structure, heterotrimer of UreA (gamma), UreB (beta) and UreC (alpha) subunits. Three heterotrimers associate to form the active enzyme.

Its subcellular location is the cytoplasm. It catalyses the reaction urea + 2 H2O + H(+) = hydrogencarbonate + 2 NH4(+). Its pathway is nitrogen metabolism; urea degradation; CO(2) and NH(3) from urea (urease route): step 1/1. This chain is Urease subunit beta, found in Acinetobacter baylyi (strain ATCC 33305 / BD413 / ADP1).